Consider the following 95-residue polypeptide: CRISPR-associated endoribonuclease Cas2 (95 aa).

Aspartate 9 contributes to the Mg(2+) binding site.

It belongs to the CRISPR-associated endoribonuclease Cas2 protein family. As to quaternary structure, homodimer, forms a heterotetramer with a Cas1 homodimer. Mg(2+) is required as a cofactor.

CRISPR (clustered regularly interspaced short palindromic repeat), is an adaptive immune system that provides protection against mobile genetic elements (viruses, transposable elements and conjugative plasmids). CRISPR clusters contain sequences complementary to antecedent mobile elements and target invading nucleic acids. CRISPR clusters are transcribed and processed into CRISPR RNA (crRNA). Functions as a ssRNA-specific endoribonuclease. Involved in the integration of spacer DNA into the CRISPR cassette. The polypeptide is CRISPR-associated endoribonuclease Cas2 (Methylorubrum extorquens (strain CM4 / NCIMB 13688) (Methylobacterium extorquens)).